The sequence spans 111 residues: Cell division protein FtsB (111 aa).

The Cytoplasmic segment spans residues 1-3 (MGK). Residues 4–21 (LTLLLLILLGWLQYSLWL) form a helical membrane-spanning segment. At 22-111 (GKNGIHDYVR…TNTPSNNIQR (90 aa)) the chain is on the periplasmic side. The stretch at 33-63 (KDDVVVQQGNNAKLKDRNEQLFAEIDDLNGG) forms a coiled coil. The segment at 90-111 (ESNHRNANTAPSTNTPSNNIQR) is disordered. The segment covering 95-111 (NANTAPSTNTPSNNIQR) has biased composition (low complexity).

It belongs to the FtsB family. In terms of assembly, part of a complex composed of FtsB, FtsL and FtsQ.

The protein localises to the cell inner membrane. In terms of biological role, essential cell division protein. May link together the upstream cell division proteins, which are predominantly cytoplasmic, with the downstream cell division proteins, which are predominantly periplasmic. The protein is Cell division protein FtsB of Pectobacterium carotovorum subsp. carotovorum (strain PC1).